The primary structure comprises 251 residues: Imidazole glycerol phosphate synthase subunit HisF (251 aa).

Residues Asp-11 and Asp-130 contribute to the active site.

The protein belongs to the HisA/HisF family. Heterodimer of HisH and HisF.

Its subcellular location is the cytoplasm. The enzyme catalyses 5-[(5-phospho-1-deoxy-D-ribulos-1-ylimino)methylamino]-1-(5-phospho-beta-D-ribosyl)imidazole-4-carboxamide + L-glutamine = D-erythro-1-(imidazol-4-yl)glycerol 3-phosphate + 5-amino-1-(5-phospho-beta-D-ribosyl)imidazole-4-carboxamide + L-glutamate + H(+). It functions in the pathway amino-acid biosynthesis; L-histidine biosynthesis; L-histidine from 5-phospho-alpha-D-ribose 1-diphosphate: step 5/9. Functionally, IGPS catalyzes the conversion of PRFAR and glutamine to IGP, AICAR and glutamate. The HisF subunit catalyzes the cyclization activity that produces IGP and AICAR from PRFAR using the ammonia provided by the HisH subunit. The protein is Imidazole glycerol phosphate synthase subunit HisF of Chlorobaculum tepidum (strain ATCC 49652 / DSM 12025 / NBRC 103806 / TLS) (Chlorobium tepidum).